Reading from the N-terminus, the 937-residue chain is Calsyntenin-2 (937 aa).

A signal peptide spans 1-22 (MKMRAITAMLLLVLSGQCGILA). Residues 23-818 (GKVNKHKPWI…NSDHISGTPP (796 aa)) are Extracellular-facing. Cadherin domains lie at 32–148 (IETS…SPVF) and 149–249 (REPL…KPGW). N-linked (GlcNAc...) asparagine glycosylation occurs at asparagine 86. N-linked (GlcNAc...) asparagine glycosylation is found at asparagine 330, asparagine 365, and asparagine 716. A helical membrane pass occupies residues 819–839 (AATVVIVMCIAALVVIVVLGI). Over 840-937 (YRIHTTHQDS…LEWDPSTLPY (98 aa)) the chain is Cytoplasmic. Residues 846–937 (HQDSSKEDEE…LEWDPSTLPY (92 aa)) are disordered. The span at 865 to 874 (DNSNLNSIEG) shows a compositional bias: polar residues. Composition is skewed to acidic residues over residues 881 to 900 (VREE…DDLA) and 907 to 917 (ESEDSDEDEET).

The protein belongs to the calsyntenin family. Homooligomer and heterooligomer; mediates both homophilic and heterophilc interactions with clstn1 and clstn3 paralogs via cadherin domains. As to expression, by 48 hours post-fertilization (hpf), widely expressed in the brain, with strong expression in the telencephalon and the midbrain.

Its subcellular location is the postsynaptic cell membrane. It is found in the endoplasmic reticulum membrane. The protein localises to the golgi apparatus membrane. The protein resides in the cell projection. It localises to the dendrite. Functionally, postsynaptic adhesion molecule. Promotes synapse development by acting as a cell adhesion molecule at the postsynaptic membrane, which associates with presynaptic neurexins. The chain is Calsyntenin-2 (clstn2a) from Danio rerio (Zebrafish).